The chain runs to 429 residues: UDP-N-acetylglucosamine 1-carboxyvinyltransferase (429 aa).

22–23 (KN) is a binding site for phosphoenolpyruvate. Position 102 (arginine 102) interacts with UDP-N-acetyl-alpha-D-glucosamine. Cysteine 126 acts as the Proton donor in catalysis. 2-(S-cysteinyl)pyruvic acid O-phosphothioketal is present on cysteine 126. UDP-N-acetyl-alpha-D-glucosamine is bound by residues 171-174 (KVSV), aspartate 316, and isoleucine 338.

Belongs to the EPSP synthase family. MurA subfamily.

It localises to the cytoplasm. The catalysed reaction is phosphoenolpyruvate + UDP-N-acetyl-alpha-D-glucosamine = UDP-N-acetyl-3-O-(1-carboxyvinyl)-alpha-D-glucosamine + phosphate. The protein operates within cell wall biogenesis; peptidoglycan biosynthesis. Its function is as follows. Cell wall formation. Adds enolpyruvyl to UDP-N-acetylglucosamine. The chain is UDP-N-acetylglucosamine 1-carboxyvinyltransferase from Azorhizobium caulinodans (strain ATCC 43989 / DSM 5975 / JCM 20966 / LMG 6465 / NBRC 14845 / NCIMB 13405 / ORS 571).